The sequence spans 279 residues: ATP synthase gamma chain (279 aa).

This sequence belongs to the ATPase gamma chain family. As to quaternary structure, F-type ATPases have 2 components, CF(1) - the catalytic core - and CF(0) - the membrane proton channel. CF(1) has five subunits: alpha(3), beta(3), gamma(1), delta(1), epsilon(1). CF(0) has three main subunits: a, b and c.

Its subcellular location is the cell membrane. In terms of biological role, produces ATP from ADP in the presence of a proton gradient across the membrane. The gamma chain is believed to be important in regulating ATPase activity and the flow of protons through the CF(0) complex. This Mycoplasma pneumoniae (strain ATCC 29342 / M129 / Subtype 1) (Mycoplasmoides pneumoniae) protein is ATP synthase gamma chain.